We begin with the raw amino-acid sequence, 263 residues long: Indole-3-glycerol phosphate synthase (263 aa).

It belongs to the TrpC family.

It carries out the reaction 1-(2-carboxyphenylamino)-1-deoxy-D-ribulose 5-phosphate + H(+) = (1S,2R)-1-C-(indol-3-yl)glycerol 3-phosphate + CO2 + H2O. Its pathway is amino-acid biosynthesis; L-tryptophan biosynthesis; L-tryptophan from chorismate: step 4/5. This is Indole-3-glycerol phosphate synthase from Sulfurimonas denitrificans (strain ATCC 33889 / DSM 1251) (Thiomicrospira denitrificans (strain ATCC 33889 / DSM 1251)).